A 218-amino-acid chain; its full sequence is Insulin-induced gene 2 protein (218 aa).

The Cytoplasmic segment spans residues 1–21; that stretch reads MGETDNAPRGPPSFLPHKMNL. The helical transmembrane segment at 22–44 threads the bilayer; the sequence is LLRGLLLFLIGVFLALVLNLLQV. At 45 to 63 the chain is on the lumenal side; it reads QRNVTLFPPDVLSSLFSSA. The chain crosses the membrane as a helical span at residues 64–81; that stretch reads WWVPLCCGTAAAAIGLLY. The Cytoplasmic segment spans residues 82–96; it reads PCIDRHLGEPHKFKR. A helical membrane pass occupies residues 97–119; the sequence is EWSSVMRCVAVFVGINHASAKVD. Over 120-122 the chain is Lumenal; sequence FAN. The chain crosses the membrane as a helical span at residues 123–141; the sequence is NTQLSLTLAALSIGLWWTF. The Cytoplasmic portion of the chain corresponds to 142 to 146; the sequence is DRSRS. A helical membrane pass occupies residues 147–168; that stretch reads GLGLGIGISFFATVVSQLLVYN. Over 169–182 the chain is Lumenal; the sequence is GVYEYTAPDFLYVR. The helical transmembrane segment at 183–200 threads the bilayer; it reads SWLPCIFFAGGITMGNIG. Residues 201 to 218 lie on the Cytoplasmic side of the membrane; sequence RQLEMYERLALVEKSHRD. Positions 212 to 218 match the KxHxx motif; the sequence is VEKSHRD.

It belongs to the INSIG family. Interacts with scap; interaction is direct and only takes place in the presence of sterols; it prevents interaction between scap and the coat protein complex II (COPII). Associates with the SCAP-SREBP complex; association is mediated via its interaction with scap and only takes place in the presence of sterols.

The protein resides in the endoplasmic reticulum membrane. Oxysterol-binding protein that mediates feedback control of cholesterol synthesis by controlling both endoplasmic reticulum to Golgi transport of scap and degradation of hmgcr. Acts as a negative regulator of cholesterol biosynthesis by mediating the retention of the SCAP-SREBP complex in the endoplasmic reticulum, thereby blocking the processing of sterol regulatory element-binding proteins (SREBPs). Binds oxysterol, including 22-hydroxycholesterol, 24-hydroxycholesterol, 25-hydroxycholesterol and 27-hydroxycholesterol, regulating interaction with scap and retention of the SCAP-SREBP complex in the endoplasmic reticulum. In presence of oxysterol, interacts with scap, retaining the SCAP-SREBP complex in the endoplasmic reticulum, thereby preventing scap from escorting SREBPs to the Golgi. Sterol deprivation reduce oxysterol-binding, disrupting the interaction between insig2 and scap, thereby promoting Golgi transport of the SCAP-SREBP complex, followed by processing and nuclear translocation of SREBPs. Also regulates cholesterol synthesis by regulating degradation of hmgcr. In Xenopus tropicalis (Western clawed frog), this protein is Insulin-induced gene 2 protein.